The chain runs to 88 residues: DASH complex subunit HSK3 (88 aa).

Residues 1-15 (MSSRGSGANAASRQS) show a composition bias toward low complexity. The tract at residues 1-24 (MSSRGSGANAASRQSMTASGGAVK) is disordered.

Belongs to the DASH complex HSK3 family. Component of the DASH complex consisting of ASK1, DAD1, DAD2, DAD3, DAD4, DAM1, DUO1, HSK3, SPC19 and SPC34, with a stoichiometry of one copy of each subunit per complex. Multiple DASH complexes oligomerize to form a ring that encircles spindle microtubules and organizes the rod-like NDC80 complexes of the outer kinetochore. DASH complex oligomerization strengthens microtubule attachments. On cytoplasmic microtubules, DASH complexes appear to form patches instead of rings.

It localises to the nucleus. Its subcellular location is the cytoplasm. It is found in the cytoskeleton. The protein localises to the spindle. The protein resides in the chromosome. It localises to the centromere. Its subcellular location is the kinetochore. Its function is as follows. Component of the DASH complex that connects microtubules with kinetochores and couples microtubule depolymerisation to chromosome movement; it is involved in retrieving kinetochores to the spindle poles before their re-orientation on the spindle in early mitosis and allows microtubule depolymerization to pull chromosomes apart and resist detachment during anaphase. Kinetochores, consisting of a centromere-associated inner segment and a microtubule-contacting outer segment, play a crucial role in chromosome segregation by mediating the physical connection between centromeric DNA and microtubules. Kinetochores also serve as an input point for the spindle assembly checkpoint, which delays anaphase until all chromosomes have bioriented on the mitotic spindle. The polypeptide is DASH complex subunit HSK3 (Chaetomium thermophilum (strain DSM 1495 / CBS 144.50 / IMI 039719) (Thermochaetoides thermophila)).